The primary structure comprises 742 residues: Synaptic vesicle glycoprotein 2A (742 aa).

Residues 1–57 form an interaction with SYT1 region; the sequence is MEEGFRDRAAFIRGAKDIAKEVKKHATKKVVKGLDRVQDEYSRRSYSRFEEEDDDDD. Over 1–169 the chain is Cytoplasmic; the sequence is MEEGFRDRAA…GHGRFQWTLY (169 aa). Basic and acidic residues predominate over residues 32–49; that stretch reads KGLDRVQDEYSRRSYSRF. Positions 32-144 are disordered; the sequence is KGLDRVQDEY…GRGEAQRRKE (113 aa). Ser-80 and Ser-81 each carry phosphoserine. Thr-84 is modified (phosphothreonine). Positions 122-137 are enriched in gly residues; sequence VRGGLGDGEGPPGGRG. The helical transmembrane segment at 170–190 threads the bilayer; the sequence is FVLGLALMADGVEVFVVGFVL. The Extracellular segment spans residues 191-205; it reads PSAEKDMCLSDSNKG. Residues 206–226 traverse the membrane as a helical segment; that stretch reads MLGLIVYLGMMVGAFLWGGLA. The Cytoplasmic portion of the chain corresponds to 227 to 233; that stretch reads DRLGRRQ. The helical transmembrane segment at 234-254 threads the bilayer; it reads CLLISLSVNSVFAFFSSFVQG. Residues 255-262 are Extracellular-facing; that stretch reads YGTFLFCR. The helical transmembrane segment at 263–283 threads the bilayer; it reads LLSGVGIGGSIPIVFSYFSEF. Residues 284–294 lie on the Cytoplasmic side of the membrane; sequence LAQEKRGEHLS. The helical transmembrane segment at 295-315 threads the bilayer; that stretch reads WLCMFWMIGGVYAAAMAWAII. Topologically, residues 316-334 are extracellular; sequence PHYGWSFQMGSAYQFHSWR. Residues 335 to 355 traverse the membrane as a helical segment; the sequence is VFVLVCAFPSVFAIGALTTQP. Over 356 to 447 the chain is Cytoplasmic; the sequence is ESPRFFLENG…CFGPEYRRIT (92 aa). The residue at position 393 (Ser-393) is a Phosphoserine. A helical transmembrane segment spans residues 448 to 468; that stretch reads LMMMGVWFTMSFSYYGLTVWF. The Extracellular portion of the chain corresponds to 469-598; sequence PDMIRHLQAV…GTGEGAYMVY (130 aa). Phosphotyrosine is present on Tyr-480. 3 N-linked (GlcNAc...) asparagine glycosylation sites follow: Asn-498, Asn-548, and Asn-573. Residues 599–619 form a helical membrane-spanning segment; sequence FVSFLGTLAVLPGNIVSALLM. The Cytoplasmic segment spans residues 620–626; the sequence is DKIGRLR. A helical transmembrane segment spans residues 627-647; that stretch reads MLAGSSVMSCVSCFFLSFGNS. Residues 648–651 lie on the Extracellular side of the membrane; it reads ESAM. A helical membrane pass occupies residues 652–672; the sequence is IALLCLFGGVSIASWNALDVL. Residues 673 to 685 are Cytoplasmic-facing; it reads TVELYPSDKRTTA. Residues 686 to 708 form a helical membrane-spanning segment; sequence FGFLNALCKLAAVLGISIFTSFV. The Extracellular portion of the chain corresponds to 709-712; that stretch reads GITK. The helical transmembrane segment at 713-731 threads the bilayer; the sequence is AAPILFASAALALGSSLAL. Over 732–742 the chain is Cytoplasmic; the sequence is KLPETRGQVLQ.

It belongs to the major facilitator superfamily. Interacts with SYT1/synaptotagmin-1 in a calcium-dependent manner. Binds the adapter protein complex AP-2. Post-translationally, phosphorylation by CK1 of the N-terminal cytoplasmic domain regulates interaction with SYT1. In terms of processing, N-glycosylated.

The protein resides in the presynapse. The protein localises to the cytoplasmic vesicle. It localises to the secretory vesicle. Its subcellular location is the synaptic vesicle membrane. Plays a role in the control of regulated secretion in neural and endocrine cells, enhancing selectively low-frequency neurotransmission. Positively regulates vesicle fusion by maintaining the readily releasable pool of secretory vesicles. The chain is Synaptic vesicle glycoprotein 2A (SV2A) from Bos taurus (Bovine).